Reading from the N-terminus, the 279-residue chain is NADPH-dependent 7-cyano-7-deazaguanine reductase (279 aa).

86 to 88 (IES) is a substrate binding site. An NADPH-binding site is contributed by 88–89 (SK). Cysteine 187 functions as the Thioimide intermediate in the catalytic mechanism. The active-site Proton donor is the aspartate 194. 226-227 (HE) is a substrate binding site. Residue 255 to 256 (RG) participates in NADPH binding.

This sequence belongs to the GTP cyclohydrolase I family. QueF type 2 subfamily. In terms of assembly, homodimer.

The protein resides in the cytoplasm. The catalysed reaction is 7-aminomethyl-7-carbaguanine + 2 NADP(+) = 7-cyano-7-deazaguanine + 2 NADPH + 3 H(+). The protein operates within tRNA modification; tRNA-queuosine biosynthesis. Its function is as follows. Catalyzes the NADPH-dependent reduction of 7-cyano-7-deazaguanine (preQ0) to 7-aminomethyl-7-deazaguanine (preQ1). This is NADPH-dependent 7-cyano-7-deazaguanine reductase from Haemophilus influenzae (strain PittGG).